Here is a 528-residue protein sequence, read N- to C-terminus: GMP synthase [glutamine-hydrolyzing] (528 aa).

The 191-residue stretch at 22-212 (AILVLDFGSQ…VFKICQSQTN (191 aa)) folds into the Glutamine amidotransferase type-1 domain. C99 (nucleophile) is an active-site residue. Catalysis depends on residues H186 and E188. Residues 213–403 (WSLESNVETI…LGIKKEALYR (191 aa)) enclose the GMPS ATP-PPase domain. Residue 240–246 (SGGTDSL) participates in ATP binding.

Homodimer.

The enzyme catalyses XMP + L-glutamine + ATP + H2O = GMP + L-glutamate + AMP + diphosphate + 2 H(+). It functions in the pathway purine metabolism; GMP biosynthesis; GMP from XMP (L-Gln route): step 1/1. Catalyzes the synthesis of GMP from XMP. This Borrelia garinii subsp. bavariensis (strain ATCC BAA-2496 / DSM 23469 / PBi) (Borreliella bavariensis) protein is GMP synthase [glutamine-hydrolyzing].